The following is a 101-amino-acid chain: Urease subunit beta (101 aa).

This sequence belongs to the urease beta subunit family. As to quaternary structure, heterotrimer of UreA (gamma), UreB (beta) and UreC (alpha) subunits. Three heterotrimers associate to form the active enzyme.

The protein resides in the cytoplasm. The enzyme catalyses urea + 2 H2O + H(+) = hydrogencarbonate + 2 NH4(+). The protein operates within nitrogen metabolism; urea degradation; CO(2) and NH(3) from urea (urease route): step 1/1. The protein is Urease subunit beta of Azoarcus sp. (strain BH72).